Here is a 349-residue protein sequence, read N- to C-terminus: KH domain-containing, RNA-binding, signal transduction-associated protein 2 (349 aa).

In terms of domain architecture, KH spans 65 to 135 (LIPVKQYPKF…HLSDELHVLI (71 aa)). Disordered regions lie at residues 181-263 (SEES…PPPA) and 320-349 (EEWTTTRSSLKAPPPRSARGGYREHPYGRY). The span at 218 to 231 (RGVLTPRGTTVTRG) shows a compositional bias: low complexity. Residues Arg230 and Arg240 each carry the omega-N-methylarginine modification. Positions 340 to 349 (GYREHPYGRY) are enriched in basic and acidic residues.

It belongs to the KHDRBS family. In terms of assembly, self-associates to form homooligomers. Interacts with SAFB, SFRS9 and YTHDC1. Found in a complex with KHDRBS1, KHDRBS2 and KHDRBS3. Interacts with RBMX. Interacts with the SH3 domains of FYN and PLCG1. Interacts with the SH2 domains of FYN, GRAP2, PLCG1 and RASA1. Interacts with RBMX. Methylated. In terms of processing, phosphorylated on tyrosine residues by FYN. Tyrosine phosphorylated by PTK6 and SRC. Tyrosine phosphorylated by SRC during mitosis. Expressed in the cortex, cerebellum, striatum, midbrain, brainstem and thalamus of the brain (at protein level). Expressed in neurons (at protein level). Expressed in brain and testis. Expressed in the dentate gyrus of the hippocampus.

It is found in the nucleus. Its function is as follows. RNA-binding protein that plays a role in the regulation of alternative splicing and influences mRNA splice site selection and exon inclusion. Its phosphorylation by FYN inhibits its ability to regulate splice site selection. Induces an increased concentration-dependent incorporation of exon in CD44 pre-mRNA by direct binding to purine-rich exonic enhancer. May function as an adapter protein for Src kinases during mitosis. Binds both poly(A) and poly(U) homopolymers. Phosphorylation by PTK6 inhibits its RNA-binding ability. The polypeptide is KH domain-containing, RNA-binding, signal transduction-associated protein 2 (Khdrbs2) (Rattus norvegicus (Rat)).